A 321-amino-acid chain; its full sequence is Putative glucan endo-1,3-beta-glucosidase GVI (321 aa).

Positions 1-6 are cleaved as a signal peptide; the sequence is LAGVEG. Glutamate 100 serves as the catalytic Proton donor. The active-site Nucleophile is glutamate 241.

It belongs to the glycosyl hydrolase 17 family.

It carries out the reaction Hydrolysis of (1-&gt;3)-beta-D-glucosidic linkages in (1-&gt;3)-beta-D-glucans.. Functionally, may provide a degree of protection against microbial invasion of germinated barley grain through its ability to degrade fungal cell wall polysaccharides. The chain is Putative glucan endo-1,3-beta-glucosidase GVI from Hordeum vulgare (Barley).